Reading from the N-terminus, the 217-residue chain is Large ribosomal subunit protein bL25 (217 aa).

Positions 187-217 (STPSGLEVEEETGEEESAEPEVIEKGKKEEE) are disordered. A compositionally biased stretch (acidic residues) spans 193–207 (EVEEETGEEESAEPE). Over residues 208–217 (VIEKGKKEEE) the composition is skewed to basic and acidic residues.

It belongs to the bacterial ribosomal protein bL25 family. CTC subfamily. In terms of assembly, part of the 50S ribosomal subunit; part of the 5S rRNA/L5/L18/L25 subcomplex. Contacts the 5S rRNA. Binds to the 5S rRNA independently of L5 and L18.

Functionally, this is one of the proteins that binds to the 5S RNA in the ribosome where it forms part of the central protuberance. The sequence is that of Large ribosomal subunit protein bL25 from Thermosipho africanus (strain TCF52B).